Reading from the N-terminus, the 292-residue chain is 4-hydroxy-tetrahydrodipicolinate synthase (292 aa).

Thr-45 contributes to the pyruvate binding site. The active-site Proton donor/acceptor is Tyr-133. Residue Lys-161 is the Schiff-base intermediate with substrate of the active site. Ile-203 provides a ligand contact to pyruvate.

It belongs to the DapA family. As to quaternary structure, homotetramer; dimer of dimers.

It localises to the cytoplasm. The enzyme catalyses L-aspartate 4-semialdehyde + pyruvate = (2S,4S)-4-hydroxy-2,3,4,5-tetrahydrodipicolinate + H2O + H(+). It participates in amino-acid biosynthesis; L-lysine biosynthesis via DAP pathway; (S)-tetrahydrodipicolinate from L-aspartate: step 3/4. Functionally, catalyzes the condensation of (S)-aspartate-beta-semialdehyde [(S)-ASA] and pyruvate to 4-hydroxy-tetrahydrodipicolinate (HTPA). This Nitrosomonas europaea (strain ATCC 19718 / CIP 103999 / KCTC 2705 / NBRC 14298) protein is 4-hydroxy-tetrahydrodipicolinate synthase.